The chain runs to 1156 residues: Cartilage intermediate layer protein 2 (1156 aa).

The N-terminal stretch at 1–20 (MASLLPLLCLCVVAAHLAGA) is a signal peptide. The TSP type-1 domain maps to 146–197 (EASWGAWGPWGPCSGSCGPGRRLRRRHCPSPAGDACPGRPLEAQKCVRPRCP). 3 cysteine pairs are disulfide-bonded: cysteine 158-cysteine 191, cysteine 162-cysteine 196, and cysteine 173-cysteine 181. N-linked (GlcNAc...) asparagine glycosylation is found at asparagine 276, asparagine 308, and asparagine 329. Residues 292-376 (PYLVKHPESR…AVRSGTARLT (85 aa)) enclose the Ig-like C2-type domain. Cysteine 313 and cysteine 359 are disulfide-bonded. The disordered stretch occupies residues 1134–1156 (SEAAQAQARASGPLRTRRGRVRQ).

In terms of processing, may be cleaved into 2 chains possibly by a furin-like protease upon or preceding secretion. In terms of tissue distribution, expressed in articular chondrocytes but not in knee meniscal cartilage cells. Localizes to the intermediate to deep zone of articular cartilage.

The protein localises to the secreted. It localises to the extracellular space. The protein resides in the extracellular matrix. Functionally, may play a role in cartilage scaffolding. The polypeptide is Cartilage intermediate layer protein 2 (CILP2) (Homo sapiens (Human)).